We begin with the raw amino-acid sequence, 473 residues long: MKTLYSLRRFYHVETLFNGTLALAGRDQETTGFAWWAGNARLINLSGKLLGAHVAHAGLIVFWAGAMNLFEVAHFVPEKPMYEQGLILLPHLATLGWGVGPGGEVIDTFPYFVSGVLHLISSAVLGFGGIYHALLGPETLEESFPFFGYVWKDRNKMTTILGIHLILLGIGAFLLVFKALYFGGVYDTWAPGGGDVRKITNLTLSPGIIFGYLLKSPFGGEGWIVSVDDLEDIIGGHVWLGSICILGGIWHILTKPFAWARRALVWSGEAYLSYSLGALSIFGFTACCFVWFNNTVYPSEFYGPTGPEASQAQAFTFLVRDQRLGANVGSAQGPTGLGKYLMRSPTGEVIFGGETMRFWDLRAPWLEPLRGPNGLDLSRLKKDIQPWQERRSAEYMTHAPLGSLNSVGGVATEINAVNYVSPRSWLATSHFVLGFFFFVGHLWHAGRARAAAAGFEKGIDRDFEPVLSMTPLN.

A propeptide spanning residues 1–14 (MKTLYSLRRFYHVE) is cleaved from the precursor. T15 bears the N-acetylthreonine mark. T15 carries the post-translational modification Phosphothreonine. A run of 5 helical transmembrane segments spans residues 69–93 (LFEV…PHLA), 134–155 (LLGP…KDRN), 178–200 (KALY…RKIT), 255–275 (KPFA…LSYS), and 291–312 (WFNN…ASQA). E367 provides a ligand contact to [CaMn4O5] cluster. The helical transmembrane segment at 447 to 471 (RARAAAAGFEKGIDRDFEPVLSMTP) threads the bilayer.

Belongs to the PsbB/PsbC family. PsbC subfamily. In terms of assembly, PSII is composed of 1 copy each of membrane proteins PsbA, PsbB, PsbC, PsbD, PsbE, PsbF, PsbH, PsbI, PsbJ, PsbK, PsbL, PsbM, PsbT, PsbX, PsbY, PsbZ, Psb30/Ycf12, at least 3 peripheral proteins of the oxygen-evolving complex and a large number of cofactors. It forms dimeric complexes. The cofactor is Binds multiple chlorophylls and provides some of the ligands for the Ca-4Mn-5O cluster of the oxygen-evolving complex. It may also provide a ligand for a Cl- that is required for oxygen evolution. PSII binds additional chlorophylls, carotenoids and specific lipids..

It is found in the plastid. It localises to the chloroplast thylakoid membrane. One of the components of the core complex of photosystem II (PSII). It binds chlorophyll and helps catalyze the primary light-induced photochemical processes of PSII. PSII is a light-driven water:plastoquinone oxidoreductase, using light energy to abstract electrons from H(2)O, generating O(2) and a proton gradient subsequently used for ATP formation. The polypeptide is Photosystem II CP43 reaction center protein (Coffea arabica (Arabian coffee)).